The following is a 367-amino-acid chain: Ferrochelatase (367 aa).

Residues H213 and E294 each contribute to the Fe cation site.

Belongs to the ferrochelatase family.

It is found in the cytoplasm. The catalysed reaction is heme b + 2 H(+) = protoporphyrin IX + Fe(2+). It functions in the pathway porphyrin-containing compound metabolism; protoheme biosynthesis; protoheme from protoporphyrin-IX: step 1/1. In terms of biological role, catalyzes the ferrous insertion into protoporphyrin IX. The sequence is that of Ferrochelatase from Polaromonas sp. (strain JS666 / ATCC BAA-500).